Here is a 1178-residue protein sequence, read N- to C-terminus: Integrin alpha-2 (1178 aa).

A signal peptide spans 1 to 26 (MGPGQAGGALLLRLLMLVQGILNCLA). The Extracellular segment spans residues 27–1129 (YNVGLPGAKI…KPTEKAEVPT (1103 aa)). FG-GAP repeat units follow at residues 31–89 (LPGA…TATC) and 98–158 (ASIS…FLTS). Cys80 and Cys89 are oxidised to a cystine. N-linked (GlcNAc...) asparagine glycans are attached at residues Asn102 and Asn109. The 178-residue stretch at 185–362 (WEAVKNFLVK…TLGEQIFSIE (178 aa)) folds into the VWFA domain. FG-GAP repeat units follow at residues 363–417 (GTVQ…VIFP), 420–472 (AFDQ…KQGN), 474–536 (TVIQ…ILNQ), 537–595 (HQFL…TIRT), and 601–661 (ILGS…FTPD). Asn429, Asn457, and Asn472 each carry an N-linked (GlcNAc...) asparagine glycan. A Cell attachment site motif is present at residues 480–482 (RGD). Ca(2+) contacts are provided by Asp496, Asp498, Asp500, Asp504, Asp560, Asn562, Asp564, Asp568, Asp624, Asn626, Asp628, and Asp632. 5 disulfides stabilise this stretch: Cys677/Cys734, Cys786/Cys792, Cys862/Cys873, Cys1016/Cys1047, and Cys1052/Cys1057. The N-linked (GlcNAc...) asparagine glycan is linked to Asn696. N-linked (GlcNAc...) asparagine glycans are attached at residues Asn1054, Asn1071, and Asn1078. A helical membrane pass occupies residues 1130–1151 (GVIIGSIIAGILLLLAMTAGLW). The Cytoplasmic segment spans residues 1152-1178 (KLGFFKRQYKKMGQNPDEMDETTELNS). Residues 1154 to 1158 (GFFKR) carry the GFFKR motif motif.

Belongs to the integrin alpha chain family. As to quaternary structure, heterodimer of an alpha and a beta subunit. Alpha-2 associates with beta-1. Interacts with HPS5 and RAB21.

The protein resides in the membrane. Its function is as follows. Integrin alpha-2/beta-1 is a collagen receptor, being responsible for adhesion of platelets and other cells to collagens, modulation of collagen and collagenase gene expression, force generation and organization of newly synthesized extracellular matrix. It is also a receptor for laminins, collagen C-propeptides and E-cadherin. Mice homozygous for a null mutation in the alpha-2 die very early in embryogenesis. This chain is Integrin alpha-2 (Itga2), found in Mus musculus (Mouse).